Consider the following 403-residue polypeptide: Dynactin subunit 2-B (403 aa).

The tract at residues 1–26 (MADPKYADLPGIARNEPDLYETSDLP) is disordered. A coiled-coil region spans residues 99–132 (PQQKYQRLLHEVQELTQEVEKTQSTLKESATEEK). The disordered stretch occupies residues 183-206 (AAKTRKDPEGKSSAKGPGPDNENL). Residues 184–194 (AKTRKDPEGKS) are compositionally biased toward basic and acidic residues. A coiled-coil region spans residues 381–401 (KENLATVEDNFSSIDGRIKKL).

Belongs to the dynactin subunit 2 family. In terms of assembly, subunit of dynactin, a multiprotein complex part of a tripartite complex with dynein and a adapter, such as BICDL1, BICD2 or HOOK3. The dynactin complex is built around ACTR1A/ACTB filament and consists of an actin-related filament composed of a shoulder domain, a pointed end and a barbed end. Its length is defined by its flexible shoulder domain. The soulder is composed of 2 DCTN1 subunits, 4 DCTN2 and 2 DCTN3.

It localises to the cytoplasm. The protein localises to the cytoskeleton. The protein resides in the microtubule organizing center. Its subcellular location is the centrosome. It is found in the membrane. Part of the dynactin complex that activates the molecular motor dynein for ultra-processive transport along microtubules. In the dynactin soulder domain, binds the ACTR1A filament and acts as a molecular ruler to determine the length. Modulates cytoplasmic dynein binding to an organelle, and plays a role in prometaphase chromosome alignment and spindle organization during mitosis. Involved in anchoring microtubules to centrosomes. In Xenopus laevis (African clawed frog), this protein is Dynactin subunit 2-B (dctn2-b).